We begin with the raw amino-acid sequence, 266 residues long: GTP cyclohydrolase III (266 aa).

The protein belongs to the archaeal-type GTP cyclohydrolase family.

The catalysed reaction is GTP + 3 H2O = 2-amino-5-formylamino-6-(5-phospho-D-ribosylamino)pyrimidin-4(3H)-one + 2 phosphate + 2 H(+). Functionally, catalyzes the formation of 2-amino-5-formylamino-6-ribofuranosylamino-4(3H)-pyrimidinone ribonucleotide monophosphate and inorganic phosphate from GTP. Also has an independent pyrophosphate phosphohydrolase activity. The sequence is that of GTP cyclohydrolase III from Methanococcus vannielii (strain ATCC 35089 / DSM 1224 / JCM 13029 / OCM 148 / SB).